A 176-amino-acid polypeptide reads, in one-letter code: Lipoprotein signal peptidase (176 aa).

A run of 4 helical transmembrane segments spans residues 10-30, 48-68, 78-98, and 102-122; these read LFQF…AIVL, VPVL…AFSF, YFFT…LLRM, and MVVL…NLID. Catalysis depends on residues Asp131 and Asp149. A helical membrane pass occupies residues 141-161; that stretch reads HFPAFNIADSAITLGTILLLI.

The protein belongs to the peptidase A8 family.

It localises to the cell inner membrane. It carries out the reaction Release of signal peptides from bacterial membrane prolipoproteins. Hydrolyzes -Xaa-Yaa-Zaa-|-(S,diacylglyceryl)Cys-, in which Xaa is hydrophobic (preferably Leu), and Yaa (Ala or Ser) and Zaa (Gly or Ala) have small, neutral side chains.. The protein operates within protein modification; lipoprotein biosynthesis (signal peptide cleavage). Functionally, this protein specifically catalyzes the removal of signal peptides from prolipoproteins. This Acinetobacter baumannii (strain ATCC 17978 / DSM 105126 / CIP 53.77 / LMG 1025 / NCDC KC755 / 5377) protein is Lipoprotein signal peptidase.